A 121-amino-acid polypeptide reads, in one-letter code: Small ribosomal subunit protein uS13 (121 aa).

Positions 99 to 121 are disordered; that stretch reads GQRTRTNARTRRGARKTVAGKKK. Basic residues predominate over residues 100–121; sequence QRTRTNARTRRGARKTVAGKKK.

Belongs to the universal ribosomal protein uS13 family. As to quaternary structure, part of the 30S ribosomal subunit. Forms a loose heterodimer with protein S19. Forms two bridges to the 50S subunit in the 70S ribosome.

Functionally, located at the top of the head of the 30S subunit, it contacts several helices of the 16S rRNA. In the 70S ribosome it contacts the 23S rRNA (bridge B1a) and protein L5 of the 50S subunit (bridge B1b), connecting the 2 subunits; these bridges are implicated in subunit movement. Contacts the tRNAs in the A and P-sites. This Synechococcus sp. (strain RCC307) protein is Small ribosomal subunit protein uS13.